The primary structure comprises 2813 residues: von Willebrand factor (2813 aa).

An N-terminal signal peptide occupies residues 1 to 22; that stretch reads MSPTRLVRVLLALALILPGKLC. Positions 23–763 are excised as a propeptide; that stretch reads TKGTVGRSSM…SSPRSHRSKR (741 aa). In terms of domain architecture, VWFD 1 spans 33 to 201; that stretch reads ARCSLFGGDF…ALSSGEQRCK (169 aa). 2 cysteine pairs are disulfide-bonded: Cys-35–Cys-162 and Cys-57–Cys-200. Asn-99, Asn-156, and Asn-211 each carry an N-linked (GlcNAc...) asparagine glycan. The TIL 1 domain occupies 295–348; it reads CPAGMEYKECVSPCTRTCQSLHVKEVCQEQCVDGCSCPEGQLLDEGHCVGSAEC. Residues 386-560 form the VWFD 2 domain; that stretch reads GECLVTGQSH…NAWKLLGACE (175 aa). Cystine bridges form between Cys-388/Cys-524, Cys-410/Cys-559, and Cys-432/Cys-440. Positions 531 to 533 match the Cell attachment site motif; the sequence is RGD. 2 TIL domains span residues 652 to 707 and 776 to 827; these read CPQG…KAQC and CPAD…LERC. The N-linked (GlcNAc...) asparagine glycan is linked to Asn-666. Positions 698–700 match the Cell attachment site motif; the sequence is RGD. Positions 764–787 are amino-terminal; it reads SLSCRPPMVKLVCPADNPRAEGLE. 3 cysteine pairs are disulfide-bonded: Cys-767–Cys-808, Cys-776–Cys-804, and Cys-810–Cys-821. Positions 788–833 are E1; sequence CAKTCQNYDLQCMSTGCVSGCLCPQGMVRHENRCVALERCPCFHQG. A CX region spans residues 826–853; the sequence is RCPCFHQGQEYAPGETVKIDCNTCVCRD. Asn-857 is a glycosylation site (N-linked (GlcNAc...) asparagine). One can recognise a VWFD 3 domain in the interval 865-1032; the sequence is ATCSAIGMAH…NSWKVNPQCA (168 aa). Disulfide bonds link Cys-867–Cys-996, Cys-889–Cys-1031, Cys-898–Cys-993, Cys-914–Cys-921, Cys-1060–Cys-1084, Cys-1071–Cys-1111, Cys-1089–Cys-1091, Cys-1126–Cys-1130, Cys-1149–Cys-1169, Cys-1153–Cys-1165, and Cys-1196–Cys-1199. One can recognise a TIL 4 domain in the interval 1146-1196; sequence YNSCAPACPITCQHPEPLACPVQCVEGCHAHCPPGKILDELLQTCIDPEDC. N-linked (GlcNAc...) asparagine glycosylation is present at Asn-1231. Disulfide bonds link Cys-1234–Cys-1237 and Cys-1272–Cys-1458. 2 VWFA domains span residues 1277-1453 and 1498-1665; these read DLVF…RDEI and DVVF…PDLV. Asn-1515 and Asn-1574 each carry an N-linked (GlcNAc...) asparagine glycan. 8 disulfide bridges follow: Cys-1669–Cys-1670, Cys-1686–Cys-1872, Cys-1879–Cys-1904, Cys-1899–Cys-1940, Cys-1927–Cys-2088, Cys-1950–Cys-2085, Cys-1972–Cys-2123, and Cys-1993–Cys-2001. A VWFA 3 domain is found at 1691–1871; it reads DVVLLLDGSS…TLGNSFFHKL (181 aa). The VWFD 4 domain occupies 1948–2124; sequence CVCMGSSTRH…TVQQLGKTCQ (177 aa). The segment at 2216–2261 is E2; that stretch reads CPRLCEGNTSSCGDQPSEGCFCPPNQVMLEGSCVPEEACTQCISED. N-linked (GlcNAc...) asparagine glycosylation is found at Asn-2223, Asn-2290, Asn-2357, and Asn-2400. In terms of domain architecture, VWFC 1 spans 2255–2328; sequence TQCISEDGVR…CCPEYECVCD (74 aa). The 67-residue stretch at 2429-2495 folds into the VWFC 2 domain; it reads KVCVHRGTIY…HEGECCGRCL (67 aa). Residues 2507–2509 carry the Cell attachment site motif; the sequence is RGD. N-linked (GlcNAc...) asparagine glycans are attached at residues Asn-2546 and Asn-2585. Residues 2580-2645 enclose the VWFC 3 domain; the sequence is EACLLNGTII…NQGECCGRCL (66 aa). Disulfide bonds link Cys-2724/Cys-2774, Cys-2739/Cys-2788, Cys-2750/Cys-2804, and Cys-2754/Cys-2806. The CTCK domain occupies 2724 to 2812; the sequence is CKDIIAKLQR…QCRCSPRKCS (89 aa). Asn-2790 carries N-linked (GlcNAc...) asparagine glycosylation.

As to quaternary structure, multimeric. Interacts with F8. Post-translationally, all cysteine residues are involved in intrachain or interchain disulfide bonds. N- and O-glycosylated. Plasma.

It is found in the secreted. The protein localises to the extracellular space. It localises to the extracellular matrix. Its function is as follows. Important in the maintenance of hemostasis, it promotes adhesion of platelets to the sites of vascular injury by forming a molecular bridge between sub-endothelial collagen matrix and platelet-surface receptor complex, glycoprotein Ibalpha/IX/V. Also acts as a chaperone for coagulation factor VIII, delivering it to the site of injury, stabilizing its heterodimeric structure and protecting it from premature clearance from plasma. The sequence is that of von Willebrand factor (VWF) from Canis lupus familiaris (Dog).